The following is a 361-amino-acid chain: Small ribosomal subunit protein mS46 (361 aa).

A mitochondrion-targeting transit peptide spans 1 to 14; it reads MRSSMFRCVSRAHY. The segment at 37–99 is disordered; it reads ASSNALKLDK…SDSVRANKQQ (63 aa). The segment covering 43-52 has biased composition (basic and acidic residues); it reads KLDKMKEGRM. The segment covering 59–68 has biased composition (low complexity); it reads GNQNRNSMNN. The segment covering 69 to 91 has biased composition (basic and acidic residues); the sequence is KESRGREGNQGERNMRLKNRSSD.

This sequence belongs to the mitochondrion-specific ribosomal protein mS46 family. Component of the mitochondrial small ribosomal subunit (mt-SSU). Mature yeast 74S mitochondrial ribosomes consist of a small (37S) and a large (54S) subunit. The 37S small subunit contains a 15S ribosomal RNA (15S mt-rRNA) and 34 different proteins. The 54S large subunit contains a 21S rRNA (21S mt-rRNA) and 46 different proteins.

Its subcellular location is the mitochondrion. In terms of biological role, component of the mitochondrial ribosome (mitoribosome), a dedicated translation machinery responsible for the synthesis of mitochondrial genome-encoded proteins, including at least some of the essential transmembrane subunits of the mitochondrial respiratory chain. The mitoribosomes are attached to the mitochondrial inner membrane and translation products are cotranslationally integrated into the membrane. The sequence is that of Small ribosomal subunit protein mS46 (RSM28) from Saccharomyces cerevisiae (strain ATCC 204508 / S288c) (Baker's yeast).